We begin with the raw amino-acid sequence, 404 residues long: MKKFIKILKVLSMAIVLSACNINGIFASNLNTTNEPQKTTVFNKNDNTWNAQYFRIPSLQTLADGTMLAFSDIRYNGAEDHAYIDIGAAKSTDNGQTWDYKTVMENDRIDSTFSRVMDSTTVVTDTGRIILIAGSWNKNGNWASSTTSLRSDWSVQMVYSDDNGETWSDKVDLTTNKARIKNQPSNTIGWLAGVGSGIVMSDGTIVMPIQIALRENNANNYYSSVIYSKDNGETWTMGNKVPDPKTSENMVIELDGALIMSSRNDGKNYRASYISYDMGSTWEVYDPLHNKISTGNGSGCQGSFIKVTAKDGHRLGFISAPKNTKGGYVRDNITVYMIDFDDLSKGIRELCSPYPEDGNSSGGGYSCLSFNDGKLSILYEANGNIEYKDLTDYYLSIENNKKLK.

An N-terminal signal peptide occupies residues 1-27; sequence MKKFIKILKVLSMAIVLSACNINGIFA. Substrate is bound at residue Arg-55. Residue Asp-80 is the Proton acceptor of the active site. BNR repeat units lie at residues 89 to 100, 158 to 169, and 226 to 237; these read AKSTDNGQTWDY, VYSDDNGETWSD, and IYSKDNGETWTM. Arg-263 serves as a coordination point for substrate. Residues 273–284 form a BNR 4 repeat; it reads YISYDMGSTWEV. Residue Tyr-365 is the Nucleophile of the active site.

The protein belongs to the glycosyl hydrolase 33 family. In terms of processing, it is possible that the sialidase is cleaved in front of a cysteine within the leader peptide, forming a glyceride thioether bond which links the protein to the membrane. A second proteolytic cleavage releases the mature extracellular protein.

It is found in the secreted. The enzyme catalyses Hydrolysis of alpha-(2-&gt;3)-, alpha-(2-&gt;6)-, alpha-(2-&gt;8)- glycosidic linkages of terminal sialic acid residues in oligosaccharides, glycoproteins, glycolipids, colominic acid and synthetic substrates.. Its function is as follows. Sialidases have been suggested to be pathogenic factors in microbial infections. The chain is Sialidase from Paraclostridium sordellii (Clostridium sordellii).